The chain runs to 512 residues: Multidrug resistance protein 3 (512 aa).

14 helical membrane passes run 13-33, 48-68, 79-99, 109-129, 139-159, 163-183, 200-220, 228-248, 272-292, 304-324, 333-353, 358-378, 399-421, and 475-495; these read FVVLGLLLGILMSAMDNTIVA, KFAWVTASYMVAVMAGMPIYG, FFLFGLIFFLIGSALCGIAQT, IQGIGGGALLPIAFTIIFDLF, GMFGAVFGLSSVLGPLLGAII, ISWHWVFYINVPIGALSLFFI, WGGAITLVVSIVCLMFALELG, SIQIIGLFIVFAVFFIAFFIV, ILAFLYGGTFIILAVFIPIFV, GFILTPMMIGSVIGSMIGGIF, LMLISVIAFFIGMLLLSNMTP, VWLTVFMMISGFGVGFNFSLL, SFLRSFGMTLGVTIFGTVQTNVF, and ITYVFLLALIPIVLAAVTILF.

This sequence belongs to the major facilitator superfamily. EmrB family.

The protein resides in the cell membrane. Its function is as follows. Confers resistance to puromycin, tosufloxacin and norfloxacin. The chain is Multidrug resistance protein 3 (bmr3) from Bacillus subtilis (strain 168).